The sequence spans 1388 residues: ESX-5 secretion system protein EccC5 (1388 aa).

The next 2 helical transmembrane spans lie at 38 to 58 (WLIVVGVVVVGLLGGMVAMVF) and 65 to 85 (FGGVGSIFPIFMMVGIMMMMF). FtsK domains follow at residues 477–679 (GELL…GAAQ), 855–1049 (QPPW…EDAK), and 1158–1351 (LQPV…DPDE). ATP-binding positions include 500–507 (GTTGSGKS), 873–880 (GAGGSGKT), and 1175–1182 (GRRECGRT).

In terms of assembly, part of the ESX-5 / type VII secretion system (T7SS), which is composed of cytosolic and membrane components. The ESX-5 membrane complex is composed of EccB5, EccC5, EccD5 and EccE5.

It is found in the cell inner membrane. Part of the ESX-5 specialized secretion system, which is responsible for the secretion of EsxN and a number of PE_PGRS and PPE proteins. This component is essential for ESX-5 complex stability and secretion. This Mycobacterium marinum (strain ATCC BAA-535 / M) protein is ESX-5 secretion system protein EccC5.